A 341-amino-acid chain; its full sequence is Homeobox protein mls-2 (341 aa).

2 disordered regions span residues 1-78 and 139-209; these read MPTS…DSTN and SNPD…TVFS. Positions 64–78 are enriched in polar residues; that stretch reads TTQSSPSASSEDSTN. Positions 153-166 are enriched in basic and acidic residues; sequence KDEKSEGKDGETRD. Positions 201-260 form a DNA-binding region, homeobox; the sequence is KKKTRTVFSRSQVSQLEMMFECKRYLSSQERSNLAQKLHLTETQVKIWFQNRRNKFKRQA.

This sequence belongs to the HMX homeobox family. As to expression, expressed in a subset of head neurons, including AIM and ASK (at protein level).

The protein localises to the nucleus. In terms of biological role, transcription factor that binds to the promoter of target genes. Regulates fate specification and/or differentiation of multiple cell types arising from the embryonic mesodermal (M) lineage and the ABp(l/r)paa precursors. In the postembryonic M lineage, regulates cleavage orientation, cell proliferation and cell fate specification. Regulates hlh-1 expression to specify coelomocyte fate in the mesodermal (M) lineage. In AWC neurons, initiates expression of ceh-36, leading to the expression of terminal differentiation genes. Regulates ventral cephalic sheath (CEPsh) glia differentiation and expression of transcription factor hlh-17 in CEPsh glia. Promotes terminal differentiation and morphogenesis of the epithelial duct and pore cells. In the duct cell, cooperates with the EGF-Ras-ERK pathway in turning on the terminal differentiation gene lin-48. The sequence is that of Homeobox protein mls-2 from Caenorhabditis elegans.